The chain runs to 579 residues: Thiol:disulfide interchange protein DsbD (579 aa).

The signal sequence occupies residues 1 to 16 (MKKLFLFFTLIFTAFA). Intrachain disulfides connect Cys124-Cys129 and Cys193-Cys315. A run of 8 helical transmembrane segments spans residues 178-198 (IFGF…LPML), 230-250 (LTYT…QIAL), 254-274 (YVMI…FGLF), 296-316 (GAFG…SPCT), 337-357 (AVTL…ITLF), 376-396 (FGFV…PEVW), 397-417 (ESRL…LQMS), and 420-440 (GFGY…VQPL). The region spanning 449-579 (TTTQSAVENM…AFSNWIEKLL (131 aa)) is the Thioredoxin domain. A disulfide bridge links Cys495 with Cys498.

Belongs to the thioredoxin family. DsbD subfamily.

The protein localises to the cell inner membrane. It carries out the reaction [protein]-dithiol + NAD(+) = [protein]-disulfide + NADH + H(+). It catalyses the reaction [protein]-dithiol + NADP(+) = [protein]-disulfide + NADPH + H(+). Required to facilitate the formation of correct disulfide bonds in some periplasmic proteins and for the assembly of the periplasmic c-type cytochromes. Acts by transferring electrons from cytoplasmic thioredoxin to the periplasm. This transfer involves a cascade of disulfide bond formation and reduction steps. The polypeptide is Thiol:disulfide interchange protein DsbD (Haemophilus influenzae (strain PittGG)).